Consider the following 180-residue polypeptide: Epididymal-specific lipocalin-6 (180 aa).

Positions 1 to 20 (MGGLLLAALLALVAVPRAQA) are cleaved as a signal peptide. A disulfide bridge links Cys-81 with Cys-174.

This sequence belongs to the calycin superfamily. Lipocalin family.

The protein resides in the secreted. In terms of biological role, may play a role in male fertility. The protein is Epididymal-specific lipocalin-6 (LCN6) of Macaca mulatta (Rhesus macaque).